The sequence spans 95 residues: ESAT-6-like protein EsxA (95 aa).

It belongs to the WXG100 family. ESAT-6 subfamily. Forms a tight 1:1 complex with EsxB. An artificial EsxA-EsxB heterodimer interacts with EspA.

The protein resides in the secreted. Functionally, an exported protein. Unlike its M.tuberculosis counterpart has poor pore forming ability in artificial liposomes, does not undergo conformational change at acidic pH. Mutation of 2 residues to those found in M.tuberculosis (25-TA-26 to IH) alters the properties of this protein so that it inserts into liposomes at acidic pH, forming pores, like its M.tuberculosis counterpart. This Mycolicibacterium smegmatis (strain ATCC 700084 / mc(2)155) (Mycobacterium smegmatis) protein is ESAT-6-like protein EsxA.